The sequence spans 528 residues: GMP synthase [glutamine-hydrolyzing] (528 aa).

Residues 3 to 199 (KVAIIDFGSQ…FLDIAGCQKD (197 aa)) form the Glutamine amidotransferase type-1 domain. The Nucleophile role is filled by cysteine 83. Residues histidine 174 and glutamate 176 contribute to the active site. One can recognise a GMPS ATP-PPase domain in the interval 200–394 (WTVTSFIDDQ…LGISTEILMR (195 aa)). 227–233 (SGGVDSS) is an ATP binding site.

Homodimer.

The catalysed reaction is XMP + L-glutamine + ATP + H2O = GMP + L-glutamate + AMP + diphosphate + 2 H(+). It participates in purine metabolism; GMP biosynthesis; GMP from XMP (L-Gln route): step 1/1. Its function is as follows. Catalyzes the synthesis of GMP from XMP. This is GMP synthase [glutamine-hydrolyzing] from Ehrlichia ruminantium (strain Welgevonden).